Here is a 122-residue protein sequence, read N- to C-terminus: Large ribosomal subunit protein uL14 (122 aa).

This sequence belongs to the universal ribosomal protein uL14 family. In terms of assembly, part of the 50S ribosomal subunit. Forms a cluster with proteins L3 and L19. In the 70S ribosome, L14 and L19 interact and together make contacts with the 16S rRNA in bridges B5 and B8. Interacts with ribosomal silencing factor RsfS, which may inhibit ribosomal subunit association.

In terms of biological role, binds to 23S rRNA. Forms part of two intersubunit bridges in the 70S ribosome. The protein is Large ribosomal subunit protein uL14 of Treponema pallidum (strain Nichols).